The chain runs to 215 residues: uncharacterized protein (215 aa).

The interval 25–48 (LKSASPGPAPASQQASSFGSAPAQ) is disordered. The segment covering 27–47 (SASPGPAPASQQASSFGSAPA) has biased composition (low complexity).

This is an uncharacterized protein from Homo sapiens (Human).